A 111-amino-acid chain; its full sequence is uncharacterized protein (111 aa).

3 helical membrane-spanning segments follow: residues 22–42, 48–68, and 75–95; these read ASLI…ANIT, LTPA…VSVL, and VLVT…PKIL.

It localises to the membrane. This is an uncharacterized protein from Saccharomyces cerevisiae (strain ATCC 204508 / S288c) (Baker's yeast).